Consider the following 341-residue polypeptide: MFVDKTLMITGGTGSFGNAVLSRFIESDIINDIKEIRIFSRDEKKQEDMRIALSNPKLKFYIGDVRNYKSVDEAMHGVDYVFHAAALKQVPTCEFYPMEAINTNVLGAENVLSAAIKNKVAKVVVLSTDKAVYPVNVMGLSKALMEKLAIAKARMRSMNETVLCVTRYGNVMASRGSVIPLFINQIKQGKELTITEPSMTRFLMSLVDSVNLVLYAFEHGRQGDIFVQKSPASTIAVLAKALQDIFGSKNKIRFIGTRHGEKHYESLVSSEDMAKAEDLGDYYRIPMDGRDLNYAKYFVEGEKKVALLDDYTSHNTRRLNLEEVKELLLTLNYVQEELKNA.

This sequence belongs to the polysaccharide synthase family.

The catalysed reaction is UDP-alpha-D-glucose = UDP-alpha-D-galactose. Its function is as follows. Epimerizes UDP-galactose to UDP-glucose. The sequence is that of UDP-glucose 4-epimerase (capD) from Rickettsia canadensis (strain McKiel).